Reading from the N-terminus, the 87-residue chain is Small ribosomal subunit protein uS15 (87 aa).

Residues 1–19 are compositionally biased toward basic and acidic residues; it reads MDKAKKQELMAKHARHEGD. The interval 1 to 23 is disordered; it reads MDKAKKQELMAKHARHEGDTGSP.

The protein belongs to the universal ribosomal protein uS15 family. Part of the 30S ribosomal subunit. Forms a bridge to the 50S subunit in the 70S ribosome, contacting the 23S rRNA.

In terms of biological role, one of the primary rRNA binding proteins, it binds directly to 16S rRNA where it helps nucleate assembly of the platform of the 30S subunit by binding and bridging several RNA helices of the 16S rRNA. Its function is as follows. Forms an intersubunit bridge (bridge B4) with the 23S rRNA of the 50S subunit in the ribosome. The protein is Small ribosomal subunit protein uS15 of Clostridium botulinum (strain Loch Maree / Type A3).